Consider the following 476-residue polypeptide: Bifunctional protein HldE (476 aa).

The interval 1–318 (MAQYSAEFKQ…ENAIHARPET (318 aa)) is ribokinase. Position 195-198 (195-198 (NMSE)) interacts with ATP. Aspartate 264 is a catalytic residue. The interval 344-476 (MTNGCFDILH…VIEKIKLLKD (133 aa)) is cytidylyltransferase.

It in the N-terminal section; belongs to the carbohydrate kinase PfkB family. This sequence in the C-terminal section; belongs to the cytidylyltransferase family. Homodimer.

It carries out the reaction D-glycero-beta-D-manno-heptose 7-phosphate + ATP = D-glycero-beta-D-manno-heptose 1,7-bisphosphate + ADP + H(+). The catalysed reaction is D-glycero-beta-D-manno-heptose 1-phosphate + ATP + H(+) = ADP-D-glycero-beta-D-manno-heptose + diphosphate. The protein operates within nucleotide-sugar biosynthesis; ADP-L-glycero-beta-D-manno-heptose biosynthesis; ADP-L-glycero-beta-D-manno-heptose from D-glycero-beta-D-manno-heptose 7-phosphate: step 1/4. It participates in nucleotide-sugar biosynthesis; ADP-L-glycero-beta-D-manno-heptose biosynthesis; ADP-L-glycero-beta-D-manno-heptose from D-glycero-beta-D-manno-heptose 7-phosphate: step 3/4. Its function is as follows. Catalyzes the phosphorylation of D-glycero-D-manno-heptose 7-phosphate at the C-1 position to selectively form D-glycero-beta-D-manno-heptose-1,7-bisphosphate. Functionally, catalyzes the ADP transfer from ATP to D-glycero-beta-D-manno-heptose 1-phosphate, yielding ADP-D-glycero-beta-D-manno-heptose. The protein is Bifunctional protein HldE of Haemophilus influenzae (strain 86-028NP).